Here is a 483-residue protein sequence, read N- to C-terminus: Probable apyrase 3 (483 aa).

At 1-29 (MTPETDALKVQILPKHQSLPYTVTKAKSK) the chain is on the cytoplasmic side. A helical; Signal-anchor for type II membrane protein membrane pass occupies residues 30–50 (SLILLVVVSVTITLGLLLYVF). Residues 51–483 (NSNSVISSGS…NGKSRKYLGF (433 aa)) are Extracellular-facing. 72-82 (VLIDAGSSGTR) contributes to the ATP binding site. Glu-195 acts as the Proton acceptor in catalysis. Position 219–229 (219–229 (GIVELGGASAQ)) interacts with ATP. 4 N-linked (GlcNAc...) asparagine glycosylation sites follow: Asn-250, Asn-281, Asn-305, and Asn-326.

Belongs to the GDA1/CD39 NTPase family. Ca(2+) is required as a cofactor. As to expression, expressed in the initiation zone of lateral root and in the lateral root tip, the adaxial junction of lateral shoots with the stems, and in the abscission zone of flower organs. Not expressed in the rosette leaves.

The protein resides in the membrane. It carries out the reaction a ribonucleoside 5'-triphosphate + 2 H2O = a ribonucleoside 5'-phosphate + 2 phosphate + 2 H(+). Catalyzes the hydrolysis of phosphoanhydride bonds of nucleoside tri- and di-phosphates. The polypeptide is Probable apyrase 3 (APY3) (Arabidopsis thaliana (Mouse-ear cress)).